The following is a 311-amino-acid chain: Protein N-terminal asparagine amidohydrolase (311 aa).

As to quaternary structure, monomer.

The protein resides in the cytoplasm. It carries out the reaction N-terminal L-asparaginyl-[protein] + H2O + H(+) = N-terminal L-aspartyl-[protein] + NH4(+). Functionally, N-terminal asparagine deamidase that mediates deamidation of N-terminal asparagine residues to aspartate. Required for the ubiquitin-dependent turnover of intracellular proteins that initiate with Met-Asn. These proteins are acetylated on the retained initiator methionine and can subsequently be modified by the removal of N-acetyl methionine by acylaminoacid hydrolase (AAH). Conversion of the resulting N-terminal asparagine to aspartate by NTAN1/PNAD renders the protein susceptible to arginylation, polyubiquitination and degradation as specified by the N-end rule. This enzyme does not act on substrates with internal or C-terminal asparagines and does not act on glutamine residues in any position. In Sus scrofa (Pig), this protein is Protein N-terminal asparagine amidohydrolase (NTAN1).